We begin with the raw amino-acid sequence, 376 residues long: Chaperone protein DnaJ (376 aa).

Positions 5-70 (DYYEVLGVAR…NKRRAYDAHG (66 aa)) constitute a J domain. The CR-type zinc finger occupies 132 to 209 (GIERRIEIPT…CHGAGRVEED (78 aa)). 8 residues coordinate Zn(2+): Cys-145, Cys-148, Cys-161, Cys-164, Cys-183, Cys-186, Cys-197, and Cys-200. CXXCXGXG motif repeat units follow at residues 145 to 152 (CEPCHGSG), 161 to 168 (CATCHGRG), 183 to 190 (CPHCDGRG), and 197 to 204 (CKTCHGAG).

The protein belongs to the DnaJ family. In terms of assembly, homodimer. The cofactor is Zn(2+).

It is found in the cytoplasm. In terms of biological role, participates actively in the response to hyperosmotic and heat shock by preventing the aggregation of stress-denatured proteins and by disaggregating proteins, also in an autonomous, DnaK-independent fashion. Unfolded proteins bind initially to DnaJ; upon interaction with the DnaJ-bound protein, DnaK hydrolyzes its bound ATP, resulting in the formation of a stable complex. GrpE releases ADP from DnaK; ATP binding to DnaK triggers the release of the substrate protein, thus completing the reaction cycle. Several rounds of ATP-dependent interactions between DnaJ, DnaK and GrpE are required for fully efficient folding. Also involved, together with DnaK and GrpE, in the DNA replication of plasmids through activation of initiation proteins. The chain is Chaperone protein DnaJ from Xanthomonas campestris pv. campestris (strain 8004).